Here is a 421-residue protein sequence, read N- to C-terminus: 3-isopropylmalate dehydratase large subunit (421 aa).

The [4Fe-4S] cluster site is built by C302, C362, and C365.

This sequence belongs to the aconitase/IPM isomerase family. LeuC type 2 subfamily. As to quaternary structure, heterodimer of LeuC and LeuD. [4Fe-4S] cluster serves as cofactor.

It catalyses the reaction (2R,3S)-3-isopropylmalate = (2S)-2-isopropylmalate. The protein operates within amino-acid biosynthesis; L-leucine biosynthesis; L-leucine from 3-methyl-2-oxobutanoate: step 2/4. Its function is as follows. Catalyzes the isomerization between 2-isopropylmalate and 3-isopropylmalate, via the formation of 2-isopropylmaleate. This chain is 3-isopropylmalate dehydratase large subunit, found in Nitratiruptor sp. (strain SB155-2).